The chain runs to 239 residues: Putative CRISPR-associated endoribonuclease-like protein Cas6nc (239 aa).

Belongs to the CRISPR-associated protein Cas6/Cse3/CasE family. As to quaternary structure, monomer; homodimer when crystallized in the presence of crRNA. Varying the crRNA sequence varies degree of oligomerization and structure.

Its function is as follows. CRISPR (clustered regularly interspaced short palindromic repeat), is an adaptive immune system that provides protection against mobile genetic elements (viruses, transposable elements and conjugative plasmids). CRISPR clusters contain sequences complementary to antecedent mobile elements and target invading nucleic acids. CRISPR clusters are transcribed and processed into CRISPR RNA (crRNA), also called psiRNA (prokaryotic silencing) in this organism (Potential). The sequence is that of Putative CRISPR-associated endoribonuclease-like protein Cas6nc (cas6nc) from Pyrococcus horikoshii (strain ATCC 700860 / DSM 12428 / JCM 9974 / NBRC 100139 / OT-3).